We begin with the raw amino-acid sequence, 398 residues long: Protochlorophyllide reductase, chloroplastic (398 aa).

Belongs to the short-chain dehydrogenases/reductases (SDR) family. POR subfamily.

The protein localises to the plastid. The protein resides in the chloroplast. It carries out the reaction chlorophyllide a + NADP(+) = protochlorophyllide a + NADPH + H(+). It participates in porphyrin-containing compound metabolism; chlorophyll biosynthesis. Functionally, phototransformation of protochlorophyllide (Pchlide) to chlorophyllide (Chlide). This chain is Protochlorophyllide reductase, chloroplastic (POR1), found in Daucus carota (Wild carrot).